The sequence spans 446 residues: tRNA-2-methylthio-N(6)-dimethylallyladenosine synthase (446 aa).

The MTTase N-terminal domain occupies 3–120; it reads KKLFIETHGC…LPEMIDAARS (118 aa). C12, C49, C83, C157, C161, and C164 together coordinate [4Fe-4S] cluster. The region spanning 143–375 is the Radical SAM core domain; the sequence is RVDGPTAFVS…QGRIHQQGYE (233 aa). The 65-residue stretch at 378–442 folds into the TRAM domain; that stretch reads RRMVGSTQRI…PHSLRGTLIE (65 aa).

The protein belongs to the methylthiotransferase family. MiaB subfamily. As to quaternary structure, monomer. Requires [4Fe-4S] cluster as cofactor.

The protein resides in the cytoplasm. The enzyme catalyses N(6)-dimethylallyladenosine(37) in tRNA + (sulfur carrier)-SH + AH2 + 2 S-adenosyl-L-methionine = 2-methylsulfanyl-N(6)-dimethylallyladenosine(37) in tRNA + (sulfur carrier)-H + 5'-deoxyadenosine + L-methionine + A + S-adenosyl-L-homocysteine + 2 H(+). Functionally, catalyzes the methylthiolation of N6-(dimethylallyl)adenosine (i(6)A), leading to the formation of 2-methylthio-N6-(dimethylallyl)adenosine (ms(2)i(6)A) at position 37 in tRNAs that read codons beginning with uridine. The sequence is that of tRNA-2-methylthio-N(6)-dimethylallyladenosine synthase from Pseudomonas paraeruginosa (strain DSM 24068 / PA7) (Pseudomonas aeruginosa (strain PA7)).